Consider the following 423-residue polypeptide: Glucuronoxylanase XynC (423 aa).

Residues 1–33 (MMSSVKKTICVLLVCFTMMSVMLLGPGVTEVSA) form the signal peptide. Glutamate 172 functions as the Proton donor in the catalytic mechanism. Glutamate 261 (nucleophile) is an active-site residue.

It belongs to the glycosyl hydrolase 30 family.

It localises to the secreted. The enzyme catalyses Endohydrolysis of (1-&gt;4)-beta-D-xylosyl links in some glucuronoarabinoxylans.. Its pathway is glycan degradation; xylan degradation. Catalyzes the depolymerization of methylglucuronoxylan (MeGAXn). It cleaves the beta-1,4-xylosidic bond penultimate to that linking carbon one of the xylose residue substituted with alpha-1,2-linked 4-O-methyl-D-glucuronate (MeGA). The chain is Glucuronoxylanase XynC (xynC) from Bacillus subtilis.